The sequence spans 207 residues: Urease accessory protein UreG (207 aa).

14–21 (GPVGSGKT) serves as a coordination point for GTP.

Belongs to the SIMIBI class G3E GTPase family. UreG subfamily. In terms of assembly, homodimer. UreD, UreF and UreG form a complex that acts as a GTP-hydrolysis-dependent molecular chaperone, activating the urease apoprotein by helping to assemble the nickel containing metallocenter of UreC. The UreE protein probably delivers the nickel.

It localises to the cytoplasm. In terms of biological role, facilitates the functional incorporation of the urease nickel metallocenter. This process requires GTP hydrolysis, probably effectuated by UreG. In Chelativorans sp. (strain BNC1), this protein is Urease accessory protein UreG.